The chain runs to 299 residues: MVEVIDGKLIAASVIQTVKSATAALEMVSGVTTGLAVIIVGDDPASHAYVGSKSRMAKECGFKSVQHTLPAETTQEELAGLVATLNADPSIHGILVQLPLPKPLDSEPIIQSILPEKDVDGLSVVNAGKLATGDLKTGLVSCTPAGAMVFVRRTHGEDLSGLNAVVIGRSNLFGKPMAQLLLNANATVTIAHSRTKNLAEVCRNADILVAAVGRPEMVKADWVKPGATVIDVGINRVPAPEKGEGKTRLVGDVAFREVSEIAGTITPVPGGVGPMTIAMLMANTVIAAHRAAGQVPPKF.

NADP(+) is bound by residues G168 to S170, S193, and I234.

The protein belongs to the tetrahydrofolate dehydrogenase/cyclohydrolase family. As to quaternary structure, homodimer.

The catalysed reaction is (6R)-5,10-methylene-5,6,7,8-tetrahydrofolate + NADP(+) = (6R)-5,10-methenyltetrahydrofolate + NADPH. The enzyme catalyses (6R)-5,10-methenyltetrahydrofolate + H2O = (6R)-10-formyltetrahydrofolate + H(+). It functions in the pathway one-carbon metabolism; tetrahydrofolate interconversion. Catalyzes the oxidation of 5,10-methylenetetrahydrofolate to 5,10-methenyltetrahydrofolate and then the hydrolysis of 5,10-methenyltetrahydrofolate to 10-formyltetrahydrofolate. The protein is Bifunctional protein FolD 2 of Rhizobium etli (strain ATCC 51251 / DSM 11541 / JCM 21823 / NBRC 15573 / CFN 42).